The sequence spans 416 residues: Phosphoglycerate kinase 2 (416 aa).

Residues 28–30 (DMN), R44, 65–68 (HQSR), R122, and R162 each bind substrate. Residues E337 and 362–365 (GGHI) contribute to the ATP site.

The protein belongs to the phosphoglycerate kinase family. Monomer.

It localises to the cytoplasm. The enzyme catalyses (2R)-3-phosphoglycerate + ATP = (2R)-3-phospho-glyceroyl phosphate + ADP. The protein operates within carbohydrate degradation; glycolysis; pyruvate from D-glyceraldehyde 3-phosphate: step 2/5. This Methanosarcina acetivorans (strain ATCC 35395 / DSM 2834 / JCM 12185 / C2A) protein is Phosphoglycerate kinase 2.